A 303-amino-acid chain; its full sequence is Monoglyceride lipase (303 aa).

Position 10 is a phosphothreonine (Thr-10). Tyr-58 is subject to 3'-nitrotyrosine. The active-site Nucleophile is Ser-122. Ser-189 carries the phosphoserine modification. Active-site charge relay system residues include Asp-239 and His-269.

The protein belongs to the AB hydrolase superfamily. Monoacylglycerol lipase family. Homodimer. In terms of tissue distribution, ubiquitous. Highly expressed in adipose tissue, adrenal gland, ovary, heart, spleen, lung, skeletal muscle, kidney and testis. Highly expressed throughout the brain.

The protein localises to the cytoplasm. The protein resides in the cytosol. Its subcellular location is the membrane. It carries out the reaction Hydrolyzes glycerol monoesters of long-chain fatty acids.. The enzyme catalyses a 1-acylglycerol + H2O = glycerol + a fatty acid + H(+). The catalysed reaction is a 2-acylglycerol + H2O = glycerol + a fatty acid + H(+). It catalyses the reaction 1-octanoylglycerol + H2O = octanoate + glycerol + H(+). It carries out the reaction 2-(5Z,8Z,11Z,14Z-eicosatetraenoyl)-glycerol + H2O = glycerol + (5Z,8Z,11Z,14Z)-eicosatetraenoate + H(+). The enzyme catalyses 1-decanoylglycerol + H2O = decanoate + glycerol + H(+). The catalysed reaction is 1-dodecanoylglycerol + H2O = dodecanoate + glycerol + H(+). It catalyses the reaction 1-tetradecanoylglycerol + H2O = tetradecanoate + glycerol + H(+). It carries out the reaction 2-hexadecanoylglycerol + H2O = glycerol + hexadecanoate + H(+). The enzyme catalyses 1-(9Z-octadecenoyl)-glycerol + H2O = glycerol + (9Z)-octadecenoate + H(+). The catalysed reaction is 2-(9Z-octadecenoyl)-glycerol + H2O = glycerol + (9Z)-octadecenoate + H(+). It catalyses the reaction 2-(9Z,12Z-octadecadienoyl)-glycerol + H2O = (9Z,12Z)-octadecadienoate + glycerol + H(+). It carries out the reaction 1-(5Z,8Z,11Z,14Z-eicosatetraenoyl)-glycerol + H2O = glycerol + (5Z,8Z,11Z,14Z)-eicosatetraenoate + H(+). The enzyme catalyses 1-(9Z,12Z-octadecadienoyl)-glycerol + H2O = (9Z,12Z)-octadecadienoate + glycerol + H(+). The catalysed reaction is 1-hexadecanoylglycerol + H2O = glycerol + hexadecanoate + H(+). It catalyses the reaction 1-octadecanoylglycerol + H2O = octadecanoate + glycerol + H(+). It carries out the reaction prostaglandin E2 1-glyceryl ester + H2O = prostaglandin E2 + glycerol + H(+). The enzyme catalyses prostaglandin D2-1-glycerol ester + H2O = prostaglandin D2 + glycerol + H(+). The catalysed reaction is 2-glyceryl-15-deoxy-Delta(12,14)-prostaglandin J2 + H2O = 15-deoxy-Delta(12,14)-prostaglandin J2 + glycerol + H(+). It catalyses the reaction prostaglandin F2alpha 1-glyceryl ester + H2O = prostaglandin F2alpha + glycerol + H(+). It functions in the pathway glycerolipid metabolism; triacylglycerol degradation. In terms of biological role, converts monoacylglycerides to free fatty acids and glycerol. Hydrolyzes the endocannabinoid 2-arachidonoylglycerol, and thereby contributes to the regulation of endocannabinoid signaling, nociperception and perception of pain. Regulates the levels of fatty acids that serve as signaling molecules and promote cancer cell migration, invasion and tumor growth. The protein is Monoglyceride lipase of Rattus norvegicus (Rat).